Consider the following 312-residue polypeptide: Very-long-chain 3-oxoacyl-CoA reductase-like protein At1g24470 (312 aa).

The chain crosses the membrane as a helical span at residues 14-34; that stretch reads LHFVCFIGFLFLLRVLFIPLL. 52–81 serves as a coordination point for NADP(+); sequence GSWAMVTGATEGIGRAFAHELAKHGLNLIL. Ser-190 lines the substrate pocket. The active-site Proton acceptor is Tyr-205.

This sequence belongs to the short-chain dehydrogenases/reductases (SDR) family. In terms of tissue distribution, expressed in green siliques, flowers, inflorescence stems and leaves. Not detected in roots.

It is found in the endoplasmic reticulum membrane. Functionally, probable reductase, but unlike KCR1, has no beta-ketoacyl-coenzyme A reductase activity. The sequence is that of Very-long-chain 3-oxoacyl-CoA reductase-like protein At1g24470 (KCR2) from Arabidopsis thaliana (Mouse-ear cress).